A 454-amino-acid chain; its full sequence is DNA-binding protein BIN4 (454 aa).

3 disordered regions span residues 24-53 (LLSL…DDGD), 103-249 (AGKE…DKDT), and 380-454 (TFES…KAKK). Over residues 112 to 123 (DCEKLSSKHKDA) the composition is skewed to basic and acidic residues. Over residues 132–150 (LVSSDSEPSSPIKQEVTVS) the composition is skewed to polar residues. A compositionally biased stretch (basic and acidic residues) spans 229 to 249 (TPKEENCAQEILKTEDKDKDT). Basic residues predominate over residues 438–454 (PAKKARNSAPKKPKAKK).

As to quaternary structure, interacts with TOP6A, RHL1 and itself, but not with TOP6B. In terms of tissue distribution, expressed in expanding cotyledons, vascular cells, elongating root cells, developing leaf trichomes, root and apical meristems and lateral root primordia.

The protein localises to the nucleus. Functionally, component of the DNA topoisomerase VI complex. Binds to DNA. Required for chromatin organization and progression of endoreduplication cycles. The loss of BIN4 activates the ATM- and ATR-dependent DNA damage responses in postmitotic cells and induces the ectopic expression of the mitotic G2/M-specific cyclin B1;1 gene in non-dividing cells. In Arabidopsis thaliana (Mouse-ear cress), this protein is DNA-binding protein BIN4 (BIN4).